A 175-amino-acid chain; its full sequence is Short chain dehydrogenase/reductase dpmpG (175 aa).

Ile-18, Asp-71, Asn-98, and Lys-132 together coordinate NADP(+).

The protein belongs to the short-chain dehydrogenases/reductases (SDR) family.

Its pathway is secondary metabolite biosynthesis; terpenoid biosynthesis. In terms of biological role, short chain dehydrogenase/reductase; part of the gene cluster that mediates the biosynthesis of diterpenoid pyrones. The first step of the pathway is the synthesis of the alpha-pyrone moiety by the polyketide synthase dpmpA via condensation of one acetyl-CoA starter unit with 3 malonyl-CoA units and 2 methylations. The alpha-pyrone is then combined with geranylgeranyl pyrophosphate (GGPP) formed by the GGPP synthase dpmpD through the action of the prenyltransferase dpmpC to yield a linear alpha-pyrone diterpenoid. Subsequent steps in the diterpenoid pyrone biosynthetic pathway involve the decalin core formation, which is initiated by the epoxidation of the C10-C11 olefin by the FAD-dependent oxidoreductase dpmpE, and is followed by a cyclization cascade catalyzed by the terpene cyclase dpmpB. The short chain dehydrogenase/reductase dpmpG then oxidizes the 8S hydroxy group to a ketone and the short chain dehydrogenase/reductase dpmpH reduces the ketone to the 8R hydroxy group to yield higginsianin B. Higginsianin B is further methylated by the methyltransferase dpmpI to produce the intermediate named FDDP B. The cytochrome P450 monooxygenase dpmpJ then oxidizes the C-26 methyl to primary alcohol, producing the final diterpenoid pyrone with a C-26 primary alcohol on the gamma-pyrone moiety named FDDP C. The chain is Short chain dehydrogenase/reductase dpmpG from Macrophomina phaseolina (strain MS6) (Charcoal rot fungus).